We begin with the raw amino-acid sequence, 309 residues long: Protein FdhE homolog (309 aa).

A disordered region spans residues Met-1–His-22.

The protein belongs to the FdhE family.

It is found in the cytoplasm. Functionally, necessary for formate dehydrogenase activity. In Pectobacterium carotovorum subsp. carotovorum (strain PC1), this protein is Protein FdhE homolog.